A 554-amino-acid chain; its full sequence is Hydroxylamine reductase (554 aa).

The [2Fe-2S] cluster site is built by C3, C6, C18, and C25. H252, E276, C320, C408, C436, C461, E495, and K497 together coordinate hybrid [4Fe-2O-2S] cluster. At C408 the chain carries Cysteine persulfide.

It belongs to the HCP family. [2Fe-2S] cluster serves as cofactor. It depends on hybrid [4Fe-2O-2S] cluster as a cofactor.

It is found in the cytoplasm. It carries out the reaction A + NH4(+) + H2O = hydroxylamine + AH2 + H(+). In terms of biological role, catalyzes the reduction of hydroxylamine to form NH(3) and H(2)O. The polypeptide is Hydroxylamine reductase (Shewanella loihica (strain ATCC BAA-1088 / PV-4)).